Consider the following 178-residue polypeptide: Large ribosomal subunit protein uL6 (178 aa).

This sequence belongs to the universal ribosomal protein uL6 family. As to quaternary structure, part of the 50S ribosomal subunit.

Its function is as follows. This protein binds to the 23S rRNA, and is important in its secondary structure. It is located near the subunit interface in the base of the L7/L12 stalk, and near the tRNA binding site of the peptidyltransferase center. The polypeptide is Large ribosomal subunit protein uL6 (Campylobacter concisus (strain 13826)).